The sequence spans 235 residues: Small ribosomal subunit protein uS3 (235 aa).

The KH type-2 domain occupies 39 to 107; that stretch reads VRQFLNKELA…PAQINIAEVK (69 aa). Residues 216–235 form a disordered region; that stretch reads QPEQQPTDKPKKVPRGKGRK.

It belongs to the universal ribosomal protein uS3 family. Part of the 30S ribosomal subunit. Forms a tight complex with proteins S10 and S14.

Binds the lower part of the 30S subunit head. Binds mRNA in the 70S ribosome, positioning it for translation. The protein is Small ribosomal subunit protein uS3 of Aggregatibacter actinomycetemcomitans (Actinobacillus actinomycetemcomitans).